A 233-amino-acid polypeptide reads, in one-letter code: Histone H1-I (233 aa).

2 disordered regions span residues 1-55 (MSDS…HPPV) and 115-233 (TGAS…KKSK). Over residues 17–29 (KAATPAKSPAKSP) the composition is skewed to low complexity. In terms of domain architecture, H15 spans 51–125 (THPPVSEMVV…GASGSFKMPP (75 aa)). Basic and acidic residues-rich tracts occupy residues 128–137 (KKVDKPEAAP) and 144–155 (PKREIEKKEKKV). 3 stretches are compositionally biased toward basic residues: residues 172 to 186 (AAKK…KKAA), 199 to 213 (SPKK…KPTP), and 223 to 233 (AAAKKPAKKSK).

Belongs to the histone H1/H5 family.

The protein localises to the nucleus. The protein resides in the chromosome. Histones H1 are necessary for the condensation of nucleosome chains into higher-order structures. In Glyptotendipes salinus (Midge), this protein is Histone H1-I.